The following is a 652-amino-acid chain: Endoplasmic reticulum chaperone BiP (652 aa).

An N-terminal signal peptide occupies residues 1-16 (MRHLLLALLLLGGARA). ATP-binding positions include 34-37 (GTTY), K94, 225-227 (GGT), 291-298 (EKAKRALS), and 362-365 (GSTR). The segment at 123-278 (KPHIQVDVGG…KKKTGKDVRK (156 aa)) is nucleotide-binding (NBD). Residues 407–417 (QDTGDLVLLDV) are interdomain linker. The tract at residues 418-498 (CPLTLGIETV…PRGVPQIEVT (81 aa)) is substrate-binding (SBD). The tract at residues 630–652 (SKLYGSAGPPPTGEEEAAEKDEL) is disordered. A compositionally biased stretch (acidic residues) spans 642 to 652 (GEEEAAEKDEL). A Prevents secretion from ER motif is present at residues 649 to 652 (KDEL).

The protein belongs to the heat shock protein 70 family. Monomer and homooligomer; homooligomerization via the interdomain linker inactivates the chaperone activity and acts as a storage of HSPA5/BiP molecules. Interacts with DNAJC10. Interacts with DNAJB9/ERdj4; leading to recruit HSPA5/BiP to ERN1/IRE1. Interacts with ERN1/IRE1; interaction takes place following interaction with DNAJB9/ERdj4 and leads to inactivate ERN1/IRE1.

It localises to the endoplasmic reticulum lumen. The protein resides in the melanosome. Its subcellular location is the cytoplasm. The protein localises to the cell surface. The enzyme catalyses ATP + H2O = ADP + phosphate + H(+). The chaperone activity is regulated by ATP-induced allosteric coupling of the nucleotide-binding (NBD) and substrate-binding (SBD) domains. In the ADP-bound and nucleotide-free (apo) states, the two domains have little interaction. In contrast, in the ATP-bound state the two domains are tightly coupled, which results in drastically accelerated kinetics in both binding and release of polypeptide substrates. J domain-containing co-chaperones (DNAJB9/ERdj4 or DNAJC10/ERdj5) stimulate the ATPase activity and are required for efficient substrate recognition by HSPA5/BiP. Homooligomerization inactivates participating HSPA5/BiP protomers and probably act as reservoirs to store HSPA5/BiP molecules when they are not needed by the cell. Its function is as follows. Endoplasmic reticulum chaperone that plays a key role in protein folding and quality control in the endoplasmic reticulum lumen. Involved in the correct folding of proteins and degradation of misfolded proteins via its interaction with DNAJC10/ERdj5, probably to facilitate the release of DNAJC10/ERdj5 from its substrate. Acts as a key repressor of the EIF2AK3/PERK and ERN1/IRE1-mediated unfolded protein response (UPR). In the unstressed endoplasmic reticulum, recruited by DNAJB9/ERdj4 to the luminal region of ERN1/IRE1, leading to disrupt the dimerization of ERN1/IRE1, thereby inactivating ERN1/IRE1. Also binds and inactivates EIF2AK3/PERK in unstressed cells. Accumulation of misfolded protein in the endoplasmic reticulum causes release of HSPA5/BiP from ERN1/IRE1 and EIF2AK3/PERK, allowing their homodimerization and subsequent activation. May also play a role in apoptosis and cell proliferation. The chain is Endoplasmic reticulum chaperone BiP from Gallus gallus (Chicken).